A 425-amino-acid chain; its full sequence is Voltage-dependent calcium channel gamma-8 subunit (425 aa).

4 helical membrane passes run 19–39 (VQVL…TIAI), 129–149 (SIFP…VAAS), 158–178 (IILG…IGVI), and 208–228 (FGGL…NIYI). Residues serine 252 and serine 255 each carry the phosphoserine modification. Residues 272 to 304 (RRSRSSSRSSEPSPSRDASPGGPGGPGFASTDI) form a disordered region. The span at 277–287 (SSRSSEPSPSR) shows a compositional bias: low complexity. The helical transmembrane segment at 318 to 338 (VAAGLAGAGGGGGGAVGAFGG) threads the bilayer. Residues 343-354 (AGGGGGGGGGAG) show a composition bias toward gly residues. Disordered regions lie at residues 343–365 (AGGG…ASGF) and 377–425 (GGGV…TTPV). Pro residues predominate over residues 387 to 401 (PPAPPAPAPPAPSAP). The segment covering 412 to 425 (ASNTNTLNRKTTPV) has biased composition (polar residues).

This sequence belongs to the PMP-22/EMP/MP20 family. CACNG subfamily. Interacts with CACNA1C. Identified in a complex with the L-type calcium channel subunits CACNA1C, CACNA2D1 and either CACNB1 or CACNB2. Acts as an auxiliary subunit for AMPA-selective glutamate receptors (AMPARs). Found in a complex with GRIA1, GRIA2, GRIA3, GRIA4, CNIH2, CNIH3, CACNG2, CACNG3, CACNG4, CACNG5 and CACNG7. Interacts with CNIH2. Found in a complex with GRIA1, GRIA2, GRIA3, GRIA4, DLG4 and CNIH2. Post-translationally, palmitoylated. Probably palmitoylated by ZDHHC3 and ZDHHC7. In terms of tissue distribution, detected in heart left ventricle.

The protein resides in the cell membrane. It is found in the postsynaptic density membrane. Regulates the activity of L-type calcium channels that contain CACNA1C as pore-forming subunit. Regulates the trafficking and gating properties of AMPA-selective glutamate receptors (AMPARs). Promotes their targeting to the cell membrane and synapses and modulates their gating properties by slowing their rates of activation, deactivation and desensitization and by mediating their resensitization. Does not show subunit-specific AMPA receptor regulation and regulates all AMPAR subunits. The sequence is that of Voltage-dependent calcium channel gamma-8 subunit from Homo sapiens (Human).